The following is a 155-amino-acid chain: Nucleoside diphosphate kinase, cytosolic (155 aa).

ATP contacts are provided by Lys16, Phe64, Arg92, Thr98, Arg109, and Asn119. Catalysis depends on His122, which acts as the Pros-phosphohistidine intermediate.

Belongs to the NDK family. Homohexamer. Mg(2+) is required as a cofactor.

It is found in the cytoplasm. It carries out the reaction a 2'-deoxyribonucleoside 5'-diphosphate + ATP = a 2'-deoxyribonucleoside 5'-triphosphate + ADP. It catalyses the reaction a ribonucleoside 5'-diphosphate + ATP = a ribonucleoside 5'-triphosphate + ADP. Functionally, major role in the synthesis of nucleoside triphosphates other than ATP. The polypeptide is Nucleoside diphosphate kinase, cytosolic (ndkC-1) (Dictyostelium discoideum (Social amoeba)).